The primary structure comprises 448 residues: Phosphoglucosamine mutase (448 aa).

Serine 104 serves as the catalytic Phosphoserine intermediate. 4 residues coordinate Mg(2+): serine 104, aspartate 243, aspartate 245, and aspartate 247. Serine 104 carries the post-translational modification Phosphoserine.

It belongs to the phosphohexose mutase family. Mg(2+) is required as a cofactor. In terms of processing, activated by phosphorylation.

It catalyses the reaction alpha-D-glucosamine 1-phosphate = D-glucosamine 6-phosphate. Catalyzes the conversion of glucosamine-6-phosphate to glucosamine-1-phosphate. This chain is Phosphoglucosamine mutase, found in Xylella fastidiosa (strain Temecula1 / ATCC 700964).